A 474-amino-acid chain; its full sequence is 15-cis-phytoene desaturase (474 aa).

This sequence belongs to the carotenoid/retinoid oxidoreductase family.

It localises to the cell membrane. The catalysed reaction is 2 a plastoquinone + 15-cis-phytoene = 9,9',15-tri-cis-zeta-carotene + 2 a plastoquinol. It participates in carotenoid biosynthesis; lycopene biosynthesis. Its activity is regulated as follows. Inhibited by the herbicide norflurazon in a non-competitive way. Functionally, this enzyme converts phytoene into zeta-carotene via the intermediary of phytofluene by the symmetrical introduction of two double bonds at the C-11 and C-11' positions of phytoene. Also active with phytofluene and 1,2-epoxyphytoene as substrates. This is 15-cis-phytoene desaturase (pds) from Synechococcus elongatus (strain ATCC 33912 / PCC 7942 / FACHB-805) (Anacystis nidulans R2).